A 405-amino-acid chain; its full sequence is CMP-sialic acid transporter 4 (405 aa).

Residues 1–43 are Cytoplasmic-facing; sequence MQRNGVMECSVCHSKVVAPSPRSVSRAYDKHRSKISSKYRALN. The chain crosses the membrane as a helical span at residues 44–64; sequence FLLVSGDCILVGLQPILVFMS. The Lumenal segment spans residues 65-74; sequence KVDGKFQFSP. Residues 75–95 form a helical membrane-spanning segment; the sequence is ISVNFLTEVTKVIFAIVMLII. The Cytoplasmic portion of the chain corresponds to 96–121; sequence QSRKQKVGEKPLLSLSTFVQAARNNA. The helical transmembrane segment at 122 to 142 threads the bilayer; it reads LLAVPALLYAINNYLKFIMQL. Position 143 (Tyr143) is a topological domain, lumenal. Residues 144 to 164 form a helical membrane-spanning segment; it reads FSPATVKMLSNLKVLVIAILL. The Cytoplasmic segment spans residues 165-171; the sequence is KFIMRRK. The helical transmembrane segment at 172–192 threads the bilayer; that stretch reads FSIIQWEALALLLIGISVNQL. Over 193 to 203 the chain is Lumenal; it reads SSIPDGTKSFG. The chain crosses the membrane as a helical span at residues 204–224; that stretch reads LAVTTIAYIYTLIFVTVPSLA. The Cytoplasmic portion of the chain corresponds to 225–244; it reads SVYNEYALKSQFDTSIYLQN. A helical membrane pass occupies residues 245–265; it reads LFLYGYGAIFNFLGILGTVIF. Residues 266 to 281 lie on the Lumenal side of the membrane; sequence QGPESFDILQGHSRAT. The helical transmembrane segment at 282–302 threads the bilayer; that stretch reads MFLICNNAAQGILSSFFFKYA. Residues 303–322 lie on the Cytoplasmic side of the membrane; sequence DTILKKYSSTVATIFTGLAS. A helical membrane pass occupies residues 323-343; sequence AAFLGHTLTVNFLLGISIVFI. Over 344-405 the chain is Lumenal; it reads SMHQFFSPLA…TDERKPLLPI (62 aa). The interval 386–405 is disordered; that stretch reads AADDASHLTSTDERKPLLPI. Residues 389–405 show a composition bias toward basic and acidic residues; the sequence is DASHLTSTDERKPLLPI.

Belongs to the nucleotide-sugar transporter family. CMP-Sialate:CMP antiporter (TC 2.A.7.12) subfamily.

It localises to the golgi apparatus membrane. Its function is as follows. Sugar transporter involved in the transport of CMP-sialic acid from the cytoplasm into the Golgi. May transport important nucleotide sugars such as CMP-Kdo (2-keto-3-deoxy-D-manno-octulosonic acid) in physiological conditions. The polypeptide is CMP-sialic acid transporter 4 (Oryza sativa subsp. indica (Rice)).